Consider the following 310-residue polypeptide: Bifunctional protein FolD 3, chloroplastic (310 aa).

The N-terminal 48 residues, 1-48 (MFTDCSSSTTSRLIHLYNRNGVFLPRPSVSQFSLRTTASTWRCTLSIR), are a transit peptide targeting the chloroplast.

Belongs to the tetrahydrofolate dehydrogenase/cyclohydrolase family. Homodimer.

Its subcellular location is the plastid. The protein resides in the chloroplast. It carries out the reaction (6R)-5,10-methylene-5,6,7,8-tetrahydrofolate + NADP(+) = (6R)-5,10-methenyltetrahydrofolate + NADPH. The catalysed reaction is (6R)-5,10-methenyltetrahydrofolate + H2O = (6R)-10-formyltetrahydrofolate + H(+). It functions in the pathway one-carbon metabolism; tetrahydrofolate interconversion. Functionally, catalyzes the oxidation of 5,10-methylenetetrahydrofolate to 5,10-methenyltetrahydrofolate and then the hydrolysis of 5,10-methenyltetrahydrofolate to 10-formyltetrahydrofolate. This is Bifunctional protein FolD 3, chloroplastic (FOLD3) from Arabidopsis thaliana (Mouse-ear cress).